Consider the following 233-residue polypeptide: Ribulose-phosphate 3-epimerase (233 aa).

Serine 16 is a binding site for substrate. 3 residues coordinate a divalent metal cation: histidine 41, aspartate 43, and histidine 74. Catalysis depends on aspartate 43, which acts as the Proton acceptor. Residues histidine 74, 150 to 153, 185 to 187, and 207 to 208 contribute to the substrate site; these read GFCG, DGG, and AS. An a divalent metal cation-binding site is contributed by aspartate 185. Residue aspartate 185 is the Proton donor of the active site.

Belongs to the ribulose-phosphate 3-epimerase family. The cofactor is a divalent metal cation.

It catalyses the reaction D-ribulose 5-phosphate = D-xylulose 5-phosphate. It participates in carbohydrate degradation. In terms of biological role, catalyzes the reversible epimerization of D-ribulose 5-phosphate to D-xylulose 5-phosphate. The chain is Ribulose-phosphate 3-epimerase from Chlamydia trachomatis serovar D (strain ATCC VR-885 / DSM 19411 / UW-3/Cx).